Reading from the N-terminus, the 114-residue chain is Flagellar hook-basal body complex protein FliE (114 aa).

The protein belongs to the FliE family.

The protein localises to the bacterial flagellum basal body. The polypeptide is Flagellar hook-basal body complex protein FliE (Desulfitobacterium hafniense (strain Y51)).